The chain runs to 223 residues: Endonuclease V (223 aa).

Mg(2+) contacts are provided by D35 and D103.

Belongs to the endonuclease V family. The cofactor is Mg(2+).

The protein localises to the cytoplasm. It carries out the reaction Endonucleolytic cleavage at apurinic or apyrimidinic sites to products with a 5'-phosphate.. In terms of biological role, DNA repair enzyme involved in the repair of deaminated bases. Selectively cleaves double-stranded DNA at the second phosphodiester bond 3' to a deoxyinosine leaving behind the intact lesion on the nicked DNA. The chain is Endonuclease V from Salmonella agona (strain SL483).